Reading from the N-terminus, the 418-residue chain is uncharacterized protein (418 aa).

The segment covering Glu-282–Arg-297 has biased composition (basic and acidic residues). The interval Glu-282–Glu-346 is disordered. Over residues Ser-304–Asn-316 the composition is skewed to low complexity. Positions Trp-322 to Ser-337 are enriched in polar residues.

This is an uncharacterized protein from Schizosaccharomyces pombe (strain 972 / ATCC 24843) (Fission yeast).